The following is a 137-amino-acid chain: Methylmalonyl-CoA decarboxylase subunit delta (137 aa).

Residues 30–50 (VTVVLGMGITVVALIFLMYII) form a helical membrane-spanning segment.

This sequence belongs to the OadG family. In terms of assembly, the methylmalonyl-CoA decarboxylase is composed of four subunits: the carboxyltransferase alpha subunit (MmdA), the tunnel beta subunit (MmdB), the biotin-containing gamma subunit (MmdC) and the delta subunit (MmdD).

It is found in the cell membrane. The catalysed reaction is (S)-methylmalonyl-CoA + Na(+)(in) + H(+)(out) = propanoyl-CoA + Na(+)(out) + CO2. Subunit of the sodium ion pump methylmalonyl-CoA decarboxylase, which converts the chemical energy of a decarboxylation reaction into an electrochemical gradient of Na(+) ions across the cytoplasmic membrane, thereby creating a sodium ion motive force that is used for ATP synthesis. The delta subunit is required for catalytic activity as well as for the proper assembly of the individual subunits to an enzyme complex. This is Methylmalonyl-CoA decarboxylase subunit delta from Propionigenium modestum.